The primary structure comprises 431 residues: Serine hydroxymethyltransferase 2 (431 aa).

(6S)-5,6,7,8-tetrahydrofolate is bound by residues L131 and 135–137 (GHL). At K240 the chain carries N6-(pyridoxal phosphate)lysine.

It belongs to the SHMT family. As to quaternary structure, homodimer. Pyridoxal 5'-phosphate serves as cofactor.

The protein localises to the cytoplasm. The enzyme catalyses (6R)-5,10-methylene-5,6,7,8-tetrahydrofolate + glycine + H2O = (6S)-5,6,7,8-tetrahydrofolate + L-serine. It functions in the pathway one-carbon metabolism; tetrahydrofolate interconversion. It participates in amino-acid biosynthesis; glycine biosynthesis; glycine from L-serine: step 1/1. Functionally, catalyzes the reversible interconversion of serine and glycine with tetrahydrofolate (THF) serving as the one-carbon carrier. This reaction serves as the major source of one-carbon groups required for the biosynthesis of purines, thymidylate, methionine, and other important biomolecules. Also exhibits THF-independent aldolase activity toward beta-hydroxyamino acids, producing glycine and aldehydes, via a retro-aldol mechanism. The sequence is that of Serine hydroxymethyltransferase 2 from Photobacterium profundum (strain SS9).